The primary structure comprises 500 residues: Lysine--tRNA ligase (500 aa).

Mg(2+) contacts are provided by Glu-410 and Glu-417.

It belongs to the class-II aminoacyl-tRNA synthetase family. Homodimer. It depends on Mg(2+) as a cofactor.

It is found in the cytoplasm. The enzyme catalyses tRNA(Lys) + L-lysine + ATP = L-lysyl-tRNA(Lys) + AMP + diphosphate. This is Lysine--tRNA ligase from Shewanella putrefaciens (strain CN-32 / ATCC BAA-453).